A 981-amino-acid chain; its full sequence is Proline-rich transmembrane protein 3 (981 aa).

An N-terminal signal peptide occupies residues 1 to 27 (MASSPWGCVCGLLLLLLPLLGTGPALG). Residues 28–474 (RGFPRPLENS…RVLSFSWELH (447 aa)) lie on the Extracellular side of the membrane. Disordered stretches follow at residues 43–107 (PGAH…GAQR) and 169–457 (PPSL…TAPP). The segment covering 65–85 (PRADSHRNSDVRHAPAEEMPE) has biased composition (basic and acidic residues). The segment at 297 to 302 (SWEVSS) is O-glycosylated at one site. The O-linked (GalNAc...) serine glycan is linked to S329. The segment covering 331-340 (APDRPSKPER) has biased composition (basic and acidic residues). T363 carries O-linked (GalNAc...) threonine glycosylation. Residue N379 is glycosylated (N-linked (GlcNAc...) asparagine). Positions 411–427 (APSTSRRGLIRVTTQRA) are enriched in polar residues. Positions 437 to 457 (TASSMASAPASSPPANATAPP) are enriched in low complexity. The chain crosses the membrane as a helical span at residues 475-495 (VYGVGVLFLLPALLALAALAA). Over 496–501 (APAGPR) the chain is Cytoplasmic. Residues 502–522 (LALVAAVLVLVASALRSAYML) traverse the membrane as a helical segment. The Extracellular portion of the chain corresponds to 523–542 (TDPYGSQARLGVRGGLVLYN). A helical membrane pass occupies residues 543 to 563 (LPFPLLLTALAALTLLGLGAG). Topologically, residues 564-570 (LPPPLQN) are cytoplasmic. Residues 571–591 (PLLLGAVALVHGVGLLATDLL) traverse the membrane as a helical segment. Topologically, residues 592–598 (STWSVLN) are extracellular. A helical membrane pass occupies residues 599–619 (LLTQGLSCAWGAAVALGTLCL). Topologically, residues 620 to 638 (CRRRLLDGPRGWDASPGPR) are cytoplasmic. Residues 639 to 659 (LLAVAGALGLLASGLQLAAAL) traverse the membrane as a helical segment. The Extracellular segment spans residues 660–679 (WLYPGPGRVGRFSWAWWGVH). A helical membrane pass occupies residues 680–700 (FWLRLLELTWALALALAAVAA). The Cytoplasmic portion of the chain corresponds to 701 to 981 (ARPRPPTEHA…RSASSDTIEL (281 aa)). Residues 759 to 807 (AESGQLATPSSGAWGSAASLGRGPQGGPGLSRNGVGPAPSLSELDLRPP) form a disordered region. The span at 765 to 780 (ATPSSGAWGSAASLGR) shows a compositional bias: low complexity. S777 bears the Phosphoserine mark. At R780 the chain carries Omega-N-methylarginine. S789, S798, S808, S815, S854, S874, S902, S903, and S911 each carry phosphoserine. The segment at 836–865 (LRGLASPPPGGALRPRRGSHPKAELDDAGS) is disordered. A disordered region spans residues 937–981 (TVQLLPAPTPAPDSTAARQGDGQGEVQPRGKPGESRSASSDTIEL). The segment covering 972-981 (RSASSDTIEL) has biased composition (polar residues).

The protein localises to the membrane. This Homo sapiens (Human) protein is Proline-rich transmembrane protein 3 (PRRT3).